The sequence spans 63 residues: Cecropin-A (63 aa).

The first 22 residues, 1 to 22 (MNFVRILSFVFALVLALGAVSA), serve as a signal peptide directing secretion. A propeptide spanning residues 23 to 26 (APEP) is cleaved from the precursor. Residue leucine 61 is modified to Leucine amide.

It belongs to the cecropin family. As to expression, highest expression in fat body and hemocytes. Is also expressed in Malpighian tubules and to a much lesser extent in midgut. Not present in silk gland.

It is found in the secreted. Functionally, cecropins have lytic and antibacterial activity against several Gram-positive and Gram-negative bacteria. The sequence is that of Cecropin-A (CECA) from Bombyx mori (Silk moth).